Reading from the N-terminus, the 139-residue chain is MKILESSFKDGNKRIVEMESEDAYLMTMGKWVKKSMDPLRTKVFFSTMSPTHYKIEDWGGEQGKNFYNQTTPIQDMNHWPSDCSKTLMKVIGEELDQRADFLVTVLNITQLTSYRKDAHTSIYKKPWSPYDEGSASKSG.

The protein belongs to the PC-esterase family. TBL subfamily.

The sequence is that of Putative truncated protein trichome birefringence-like 46 (TBL46) from Arabidopsis thaliana (Mouse-ear cress).